Reading from the N-terminus, the 371-residue chain is tRNA-specific 2-thiouridylase MnmA (371 aa).

Residues Gly-12–Ser-19 and Met-38 each bind ATP. The interaction with target base in tRNA stretch occupies residues Asn-98 to Asp-100. Cys-103 serves as the catalytic Nucleophile. Cys-103 and Cys-200 are disulfide-bonded. Residue Gly-128 participates in ATP binding. Residues Lys-150–Gln-152 form an interaction with tRNA region. The Cysteine persulfide intermediate role is filled by Cys-200. The interaction with tRNA stretch occupies residues Arg-312–Tyr-313.

Belongs to the MnmA/TRMU family. Interacts with TusE.

The protein resides in the cytoplasm. It carries out the reaction S-sulfanyl-L-cysteinyl-[protein] + uridine(34) in tRNA + AH2 + ATP = 2-thiouridine(34) in tRNA + L-cysteinyl-[protein] + A + AMP + diphosphate + H(+). Catalyzes the 2-thiolation of uridine at the wobble position (U34) of tRNA(Lys), tRNA(Glu) and tRNA(Gln), leading to the formation of s(2)U34, the first step of tRNA-mnm(5)s(2)U34 synthesis. Sulfur is provided by IscS, via a sulfur-relay system. Binds ATP and its substrate tRNAs. The chain is tRNA-specific 2-thiouridylase MnmA from Yersinia pseudotuberculosis serotype O:1b (strain IP 31758).